A 142-amino-acid chain; its full sequence is Large ribosomal subunit protein mL42 (142 aa).

The N-terminal 32 residues, 1-32 (MALAAVKWAISSRTMLKHLFPVENGALYCVGH), are a transit peptide targeting the mitochondrion.

It belongs to the mitochondrion-specific ribosomal protein mL42 family. Component of the mitochondrial ribosome large subunit (39S) which comprises a 16S rRNA and about 50 distinct proteins. Component of the mitochondrial ribosome small subunit (28S) which comprises a 12S rRNA and about 30 distinct proteins.

It localises to the mitochondrion. The sequence is that of Large ribosomal subunit protein mL42 (MRPL42) from Bos taurus (Bovine).